A 354-amino-acid chain; its full sequence is ORC1-type DNA replication protein 9 (354 aa).

ATP contacts are provided by residues 63-67, Tyr195, and Arg207; that span reads TGKTC.

This sequence belongs to the CDC6/cdc18 family.

In terms of biological role, involved in regulation of DNA replication. The polypeptide is ORC1-type DNA replication protein 9 (orc9-1) (Halobacterium salinarum (strain ATCC 700922 / JCM 11081 / NRC-1) (Halobacterium halobium)).